The primary structure comprises 435 residues: GPI-anchor transamidase component PIGU (435 aa).

At 2-3 (AA) the chain is on the cytoplasmic side. A helical transmembrane segment spans residues 4–22 (PLVLVLVVAVTVRAALFRS). The Lumenal segment spans residues 23 to 78 (SLAEFISERVEVVSPLSSWKRVVEGLSLLDLGVSPYSGAVFHETPLIIYLFHFLID). The chain crosses the membrane as a helical span at residues 79-99 (YAELVFMITDALTAIALYFAI). Topologically, residues 100–136 (QDFNKVVFKKQKLLLELDQYAPDVAELIRTPMEMRYI) are cytoplasmic. 4 helical membrane-spanning segments follow: residues 137–158 (PLKV…VAKS), 159–178 (TCAI…IKGS), 179–194 (AFLS…YQSL), and 195–205 (YPLTLFVPGLL). The Cytoplasmic segment spans residues 206 to 222 (YLLQRQYIPVKMKSKAF). A cardiolipin-binding residues include K216 and M217. A helical transmembrane segment spans residues 223–244 (WIFSWEYAMMYVGSLVVIICLS). Over 245–286 (FFLLSSWDFIPAVYGFILSVPDLTPNIGLFWYFFAEMFEHFS) the chain is Lumenal. Residues 287–306 (LFFVCVFQINVFFYTIPLAI) traverse the membrane as a helical segment. Residues 307–311 (KLKEH) are Cytoplasmic-facing. K309 contacts a cardiolipin. A run of 2 helical transmembrane segments spans residues 312 to 331 (PIFF…SYPT) and 332 to 345 (VGDV…FPVW). Over 346 to 354 (NHLYRFLRN) the chain is Cytoplasmic. The chain crosses the membrane as a helical span at residues 355 to 372 (IFVLTCIIIVCSLLFPVL). Residues 373–384 (WHLWIYAGSANS) lie on the Lumenal side of the membrane. 2 residues coordinate a 2-acyl-6-[6-phosphoethanolamine-alpha-D-mannosyl-(1-&gt;2)-6-phosphoethanolamine-alpha-D-mannosyl-(1-&gt;6)-2-phosphoethanolamine-alpha-D-mannosyl-(1-&gt;4)-alpha-D-glucosaminyl]-1-(1-radyl,2-acyl-sn-glycero-3-phospho)-1D-myo-inositol: N383 and N385. Residues 385 to 406 (NFFYAITLTFNVGQILLISDYF) traverse the membrane as a helical segment. The Cytoplasmic segment spans residues 407–435 (YAFLRREYYLTHGLYLTAKDGTEAMLVLK).

This sequence belongs to the PIGU family. As to quaternary structure, heteropentamer. Part of the GPI-anchor transamidase complex, consisting of PIGK, PIGT, PIGS, PIGU and GAA1.

It is found in the endoplasmic reticulum membrane. The protein operates within glycolipid biosynthesis; glycosylphosphatidylinositol-anchor biosynthesis. In terms of biological role, component of the glycosylphosphatidylinositol-anchor (GPI-anchor) transamidase (GPI-T) complex that catalyzes the formation of the linkage between a proprotein and a GPI-anchor and participates in GPI anchored protein biosynthesis. Binds the lipid portion of GPI-anchor. May act as an organizer in the transmembrane layer to recruit other subunits, and thus is essential for assembly of the complex. In Homo sapiens (Human), this protein is GPI-anchor transamidase component PIGU.